The sequence spans 38 residues: SFGLCRLRRGFCARGRCRFPSIPIGRCSRFVQCCRRVW.

Disulfide bonds link C5/C33, C12/C27, and C17/C34.

Monomer. Secreted into the stomach cavity.

The protein localises to the secreted. Functionally, has antifungal activity and antibacterial activity against Gram-positive and Gram-negative bacteria. Involved in the process of food preservation in the stomach during the incubation fast. May also be present during infection. This is Spheniscin-2 from Aptenodytes patagonicus (King penguin).